Consider the following 32-residue polypeptide: Acyclotide phyb-M (32 aa).

At Gln1 the chain carries Pyrrolidone carboxylic acid. Disulfide bonds link Cys5–Cys21, Cys9–Cys23, and Cys14–Cys28.

Contains 3 disulfide bonds. As to expression, expressed in midvein, lamina and periphery of leaves (at protein level).

Functionally, probably participates in a plant defense mechanism. This is Acyclotide phyb-M from Petunia hybrida (Petunia).